The sequence spans 225 residues: Phosphoribosylformylglycinamidine synthase subunit PurQ (225 aa).

Positions 4-225 (RIGVITFPGT…LSVLDTLVTA (222 aa)) constitute a Glutamine amidotransferase type-1 domain. Residue C87 is the Nucleophile of the active site. Residues H196 and E198 contribute to the active site.

In terms of assembly, part of the FGAM synthase complex composed of 1 PurL, 1 PurQ and 2 PurS subunits.

Its subcellular location is the cytoplasm. It catalyses the reaction N(2)-formyl-N(1)-(5-phospho-beta-D-ribosyl)glycinamide + L-glutamine + ATP + H2O = 2-formamido-N(1)-(5-O-phospho-beta-D-ribosyl)acetamidine + L-glutamate + ADP + phosphate + H(+). It carries out the reaction L-glutamine + H2O = L-glutamate + NH4(+). The protein operates within purine metabolism; IMP biosynthesis via de novo pathway; 5-amino-1-(5-phospho-D-ribosyl)imidazole from N(2)-formyl-N(1)-(5-phospho-D-ribosyl)glycinamide: step 1/2. Its function is as follows. Part of the phosphoribosylformylglycinamidine synthase complex involved in the purines biosynthetic pathway. Catalyzes the ATP-dependent conversion of formylglycinamide ribonucleotide (FGAR) and glutamine to yield formylglycinamidine ribonucleotide (FGAM) and glutamate. The FGAM synthase complex is composed of three subunits. PurQ produces an ammonia molecule by converting glutamine to glutamate. PurL transfers the ammonia molecule to FGAR to form FGAM in an ATP-dependent manner. PurS interacts with PurQ and PurL and is thought to assist in the transfer of the ammonia molecule from PurQ to PurL. This chain is Phosphoribosylformylglycinamidine synthase subunit PurQ, found in Nocardia farcinica (strain IFM 10152).